Consider the following 102-residue polypeptide: Urease subunit beta (102 aa).

It belongs to the urease beta subunit family. As to quaternary structure, heterotrimer of UreA (gamma), UreB (beta) and UreC (alpha) subunits. Three heterotrimers associate to form the active enzyme.

The protein resides in the cytoplasm. The enzyme catalyses urea + 2 H2O + H(+) = hydrogencarbonate + 2 NH4(+). It functions in the pathway nitrogen metabolism; urea degradation; CO(2) and NH(3) from urea (urease route): step 1/1. The sequence is that of Urease subunit beta from Acinetobacter baumannii (strain ACICU).